Consider the following 1530-residue polypeptide: Brefeldin A resistance protein (1530 aa).

The span at 1-26 shows a compositional bias: polar residues; it reads MNQNSDTTHGQALGSTLNHTTEVTRI. Residues 1 to 100 form a disordered region; that stretch reads MNQNSDTTHG…SDDSSVDRLA (100 aa). A glycan (N-linked (GlcNAc...) asparagine) is linked at Asn-28. Residues 36-48 show a composition bias toward low complexity; it reads SSSNVDESLDSSN. Over residues 54 to 64 the composition is skewed to basic and acidic residues; the sequence is KASHTNEEYRS. N-linked (GlcNAc...) asparagine glycosylation occurs at Asn-67. A compositionally biased stretch (low complexity) spans 72-93; the sequence is PSSSNEPSPESSSNSDSSSSDD. In terms of domain architecture, ABC transporter 1 spans 153-410; sequence KTFPDIFLQP…FLDMGFDCHP (258 aa). 3 N-linked (GlcNAc...) asparagine glycosylation sites follow: Asn-273, Asn-334, and Asn-450. A phosphoserine mark is found at Ser-486 and Ser-489. Thr-491 bears the Phosphothreonine mark. 6 consecutive transmembrane segments (helical) span residues 539–559, 575–595, 620–640, 649–669, 684–704, and 791–811; these read AYIG…GSIF, VLFF…ANMF, LIVD…VLYF, GGFW…SAFF, ALGG…IPNI, and LAII…ASET. Positions 843–864 are disordered; the sequence is PLDLETGQDTQGGDVVKESPDN. The 244-residue stretch at 882-1125 folds into the ABC transporter 2 domain; that stretch reads FSWRNLNYDI…LLNYFESHGA (244 aa). 918–925 contacts ATP; it reads GESGAGKT. N-linked (GlcNAc...) asparagine glycans are attached at residues Asn-1159 and Asn-1175. Thr-1186 is subject to Phosphothreonine. A run of 6 helical transmembrane segments spans residues 1220–1240, 1255–1275, 1300–1320, 1338–1358, 1367–1387, and 1392–1412; these read ILMS…FTFY, AVFM…PKFI, AIIV…LCWF, YAWL…QAVA, ASVV…VLQP, and VGFW…EGLL. N-linked (GlcNAc...) asparagine glycosylation is found at Asn-1449 and Asn-1460. A helical membrane pass occupies residues 1492-1512; it reads GIFVGYVFFNIFAVLLLFYVF.

Belongs to the ABC transporter superfamily. ABCG family. PDR (TC 3.A.1.205) subfamily.

The protein resides in the membrane. Functionally, confers hyper-resistance to brefeldin A (BFA), an inhibitor of intracellular protein transport. Could serve as an efflux pump of various antibiotics. The polypeptide is Brefeldin A resistance protein (bfr1) (Schizosaccharomyces pombe (strain 972 / ATCC 24843) (Fission yeast)).